The sequence spans 559 residues: Sesquiterpene synthase TPS3 (559 aa).

Residues arginine 275, aspartate 312, aspartate 316, arginine 453, and aspartate 456 each contribute to the (2E,6E)-farnesyl diphosphate site. Mg(2+)-binding residues include aspartate 312 and aspartate 316. The DDXXD motif signature appears at 312 to 316; it reads DDTYD. Mg(2+) is bound by residues aspartate 456, threonine 460, and glutamate 464.

This sequence belongs to the terpene synthase family. Tpsa subfamily. Monomer. Requires Mg(2+) as cofactor. Highly expressed in glandular trichomes. Expressed in roots and leaves.

The protein localises to the cytoplasm. It carries out the reaction (2E,6E)-farnesyl diphosphate = (+)-(R)-germacrene A + diphosphate. It functions in the pathway secondary metabolite biosynthesis; terpenoid biosynthesis. Sesquiterpene synthase involved in the biosynthesis of volatile compounds. Mediates the conversion of (2E,6E)-farnesyl diphosphate (FPP) into (+)-(R)-germacrene A. In Xanthium strumarium (Rough cocklebur), this protein is Sesquiterpene synthase TPS3.